A 404-amino-acid chain; its full sequence is S-adenosylmethionine synthase (404 aa).

139–144 (GKGSSD) lines the ATP pocket.

This sequence belongs to the AdoMet synthase 2 family. It depends on Mg(2+) as a cofactor.

It carries out the reaction L-methionine + ATP + H2O = S-adenosyl-L-methionine + phosphate + diphosphate. Its pathway is amino-acid biosynthesis; S-adenosyl-L-methionine biosynthesis; S-adenosyl-L-methionine from L-methionine: step 1/1. Functionally, catalyzes the formation of S-adenosylmethionine from methionine and ATP. The polypeptide is S-adenosylmethionine synthase (Saccharolobus solfataricus (strain ATCC 35092 / DSM 1617 / JCM 11322 / P2) (Sulfolobus solfataricus)).